We begin with the raw amino-acid sequence, 314 residues long: Dihydroorotate dehydrogenase (fumarate) (314 aa).

Substrate-binding positions include K46, N70–L74, and N130. K46–S47 contributes to the FMN binding site. N130 provides a ligand contact to FMN. Residues S132 and C133 each act as nucleophile in the active site. FMN-binding residues include K167 and I195. N196 to S197 provides a ligand contact to substrate. FMN is bound by residues G224, G252 to G253, and G274 to T275.

The protein belongs to the dihydroorotate dehydrogenase family. Type 1 subfamily. In terms of assembly, homodimer. It depends on FMN as a cofactor.

It is found in the cytoplasm. It catalyses the reaction (S)-dihydroorotate + fumarate = orotate + succinate. It participates in pyrimidine metabolism; UMP biosynthesis via de novo pathway. Its activity is regulated as follows. The activity is independent of the presence of oxygen. Catalyzes the conversion of dihydroorotate to orotate with fumarate as the electron acceptor. The protein is Dihydroorotate dehydrogenase (fumarate) (URA1) of Lachancea kluyveri (strain ATCC 58438 / CBS 3082 / BCRC 21498 / NBRC 1685 / JCM 7257 / NCYC 543 / NRRL Y-12651) (Yeast).